The primary structure comprises 723 residues: Probable dipeptidyl-peptidase 5 (723 aa).

Positions 1–19 are cleaved as a signal peptide; sequence MAALRWLSAVVAVSTTVLA. Asn-79, Asn-97, Asn-154, Asn-255, Asn-381, and Asn-451 each carry an N-linked (GlcNAc...) asparagine glycan. Ser-561 serves as the catalytic Charge relay system. Asn-608 carries an N-linked (GlcNAc...) asparagine glycan. Catalysis depends on charge relay system residues Asp-644 and His-676.

This sequence belongs to the peptidase S9C family.

It localises to the secreted. In terms of biological role, extracellular dipeptidyl-peptidase which removes N-terminal dipeptides sequentially from polypeptides having unsubstituted N-termini. In Aspergillus terreus (strain NIH 2624 / FGSC A1156), this protein is Probable dipeptidyl-peptidase 5 (dpp5).